The following is a 502-amino-acid chain: Glycerol kinase (502 aa).

Thr13 is an ADP binding site. ATP-binding residues include Thr13, Thr14, and Ser15. Residue Thr13 participates in sn-glycerol 3-phosphate binding. Residue Arg17 participates in ADP binding. Sn-glycerol 3-phosphate contacts are provided by Arg83, Glu84, Tyr136, and Asp246. Residues Arg83, Glu84, Tyr136, Asp246, and Gln247 each contribute to the glycerol site. ADP-binding residues include Thr268 and Gly311. ATP-binding residues include Thr268, Gly311, Gln315, and Gly412. ADP contacts are provided by Gly412 and Asn416.

It belongs to the FGGY kinase family.

It catalyses the reaction glycerol + ATP = sn-glycerol 3-phosphate + ADP + H(+). It functions in the pathway polyol metabolism; glycerol degradation via glycerol kinase pathway; sn-glycerol 3-phosphate from glycerol: step 1/1. Its activity is regulated as follows. Inhibited by fructose 1,6-bisphosphate (FBP). Its function is as follows. Key enzyme in the regulation of glycerol uptake and metabolism. Catalyzes the phosphorylation of glycerol to yield sn-glycerol 3-phosphate. This Francisella tularensis subsp. mediasiatica (strain FSC147) protein is Glycerol kinase.